The sequence spans 235 residues: Exosome complex component RRP46 (235 aa).

Residues 1 to 13 (MEEETHTDAKIRA) are compositionally biased toward basic and acidic residues. The disordered stretch occupies residues 1-24 (MEEETHTDAKIRAENGTGSSPRGP). Ser-20 carries the phosphoserine modification.

It belongs to the RNase PH family. Homodimer. Component of the RNA exosome core complex (Exo-9), composed of EXOSC1, EXOSC2, EXOSC3, EXOSC4, EXOSC5, EXOSC6, EXOSC7, EXOSC8 and EXOSC9; within the complex interacts with EXOSC3, EXOSC8, and EXOSC9. The catalytically inactive RNA exosome core complex (Exo-9) associates with the catalytic subunit EXOSC10/RRP6. Exo-9 may associate with DIS3 to form the nucleolar exosome complex, or DIS3L to form the cytoplasmic exosome complex. Exo-9 is formed by a hexameric base ring consisting of the heterodimers EXOSC4-EXOSC9, EXOSC5-EXOSC8 and EXOSC6-EXOSC7, and a cap ring consisting of EXOSC1, EXOSC2 and EXOSC3. The RNA exosome complex associates with cofactors C1D/RRP47, MPHOSPH6/MPP6 and MTREX/MTR4. Interacts with GTPBP1. Interacts with ZC3HAV1. Interacts with DDX17 only in the presence of ZC3HAV1 in an RNA-independent manner. In terms of tissue distribution, highly expressed in a variety of hematopoietic and epithelial tumor cell lines, but not in normal hematopoietic tissues or other normal tissue, with the exception of testis.

The protein localises to the nucleus. Its subcellular location is the nucleolus. It is found in the cytoplasm. Its function is as follows. Non-catalytic component of the RNA exosome complex which has 3'-&gt;5' exoribonuclease activity and participates in a multitude of cellular RNA processing and degradation events. In the nucleus, the RNA exosome complex is involved in proper maturation of stable RNA species such as rRNA, snRNA and snoRNA, in the elimination of RNA processing by-products and non-coding 'pervasive' transcripts, such as antisense RNA species and promoter-upstream transcripts (PROMPTs), and of mRNAs with processing defects, thereby limiting or excluding their export to the cytoplasm. The RNA exosome may be involved in Ig class switch recombination (CSR) and/or Ig variable region somatic hypermutation (SHM) by targeting AICDA deamination activity to transcribed dsDNA substrates. In the cytoplasm, the RNA exosome complex is involved in general mRNA turnover and specifically degrades inherently unstable mRNAs containing AU-rich elements (AREs) within their 3' untranslated regions, and in RNA surveillance pathways, preventing translation of aberrant mRNAs. It seems to be involved in degradation of histone mRNA. The catalytic inactive RNA exosome core complex of 9 subunits (Exo-9) is proposed to play a pivotal role in the binding and presentation of RNA for ribonucleolysis, and to serve as a scaffold for the association with catalytic subunits and accessory proteins or complexes. In vitro, EXOSC5 does not bind or digest single-stranded RNA and binds to double-stranded DNA without detectable DNase activity. In Homo sapiens (Human), this protein is Exosome complex component RRP46 (EXOSC5).